Reading from the N-terminus, the 570-residue chain is Proline--tRNA ligase (570 aa).

It belongs to the class-II aminoacyl-tRNA synthetase family. ProS type 1 subfamily. In terms of assembly, homodimer.

Its subcellular location is the cytoplasm. The enzyme catalyses tRNA(Pro) + L-proline + ATP = L-prolyl-tRNA(Pro) + AMP + diphosphate. Catalyzes the attachment of proline to tRNA(Pro) in a two-step reaction: proline is first activated by ATP to form Pro-AMP and then transferred to the acceptor end of tRNA(Pro). As ProRS can inadvertently accommodate and process non-cognate amino acids such as alanine and cysteine, to avoid such errors it has two additional distinct editing activities against alanine. One activity is designated as 'pretransfer' editing and involves the tRNA(Pro)-independent hydrolysis of activated Ala-AMP. The other activity is designated 'posttransfer' editing and involves deacylation of mischarged Ala-tRNA(Pro). The misacylated Cys-tRNA(Pro) is not edited by ProRS. This Clostridium acetobutylicum (strain ATCC 824 / DSM 792 / JCM 1419 / IAM 19013 / LMG 5710 / NBRC 13948 / NRRL B-527 / VKM B-1787 / 2291 / W) protein is Proline--tRNA ligase.